A 417-amino-acid polypeptide reads, in one-letter code: NADP-specific glutamate dehydrogenase A1 (417 aa).

K105 is an active-site residue.

Belongs to the Glu/Leu/Phe/Val dehydrogenases family. As to quaternary structure, homohexamer.

The enzyme catalyses L-glutamate + NADP(+) + H2O = 2-oxoglutarate + NH4(+) + NADPH + H(+). In Halobacterium salinarum (Halobacterium halobium), this protein is NADP-specific glutamate dehydrogenase A1 (gdhA1).